Consider the following 283-residue polypeptide: MGEKKNEGDNKKKGGDNKKKNETPSITVVLKVDMHCEGCASRIVKCVRSFQGVETVKSESATGKLTVTGALDPVKLREKLEEKTKKKVDLVSPQPKKEKEKENKNKNDEDKKKSEEKKKPDNNDKKPKETPVTTAVLKLNFHCQGCIGKIQKTVTKTKGVNGLTMDKEKNLLTVKGTMDVKKLVEILSEKLKRAVEIVPPKKEKDKENGNENGEKKKGGGGDGGGKEKTGNKGGGEGVNMMEYMAAQPAYGYGYYPGGPYGYPIQAHAPQIFSDENPNACVVM.

Residues 1 to 22 (MGEKKNEGDNKKKGGDNKKKNE) show a composition bias toward basic and acidic residues. Positions 1 to 26 (MGEKKNEGDNKKKGGDNKKKNETPSI) are disordered. HMA domains lie at 25–88 (SITV…KKKV) and 132–195 (VTTA…KRAV). Zn(2+) contacts are provided by Cys-36 and Cys-39. Positions 82–129 (EKTKKKVDLVSPQPKKEKEKENKNKNDEDKKKSEEKKKPDNNDKKPKE) are enriched in basic and acidic residues. The segment at 82–131 (EKTKKKVDLVSPQPKKEKEKENKNKNDEDKKKSEEKKKPDNNDKKPKETP) is disordered. Zn(2+) contacts are provided by Cys-143 and Cys-146. Residues 198–230 (VPPKKEKDKENGNENGEKKKGGGGDGGGKEKTG) are compositionally biased toward basic and acidic residues. The disordered stretch occupies residues 198–238 (VPPKKEKDKENGNENGEKKKGGGGDGGGKEKTGNKGGGEGV). Position 280 is a cysteine methyl ester (Cys-280). Cys-280 carries S-farnesyl cysteine lipidation. A propeptide spans 281–283 (VVM) (removed in mature form).

It belongs to the HIPP family.

It is found in the nucleus. It localises to the nucleolus. The protein resides in the cytoplasm. In terms of biological role, heavy-metal-binding protein. Binds high amounts of zinc. May act as an upstream regulator of the salicylate-dependent pathogen response. Involved in abiotic stress responses, and seed and flower development. In Arabidopsis thaliana (Mouse-ear cress), this protein is Heavy metal-associated isoprenylated plant protein 3.